Reading from the N-terminus, the 333-residue chain is Electron transfer flavoprotein subunit alpha, mitochondrial (333 aa).

Residues 1–19 (MFRAAAPGQLRRAASSLRF) constitute a mitochondrion transit peptide. Residues 20–204 (QSTLVIAEHA…EISEWLDQKL (185 aa)) are domain I. At Lys-59 the chain carries N6-acetyllysine; alternate. The residue at position 59 (Lys-59) is an N6-succinyllysine; alternate. At Lys-62 the chain carries N6-acetyllysine. Lys-69 carries the post-translational modification N6-acetyllysine; alternate. N6-succinyllysine; alternate is present on Lys-69. The residue at position 75 (Lys-75) is an N6-acetyllysine. Thr-93 is subject to Phosphothreonine. Lys-101 and Lys-139 each carry N6-acetyllysine. The residue at position 140 (Ser-140) is a Phosphoserine. Residue Lys-158 is modified to N6-acetyllysine; alternate. At Lys-158 the chain carries N6-succinyllysine; alternate. The residue at position 164 (Lys-164) is an N6-acetyllysine. Lys-187 carries the post-translational modification N6-succinyllysine. Lys-203 bears the N6-acetyllysine; alternate mark. Position 203 is an N6-succinyllysine; alternate (Lys-203). Residues 205–333 (TKSDRPELTG…PEMTEILKKK (129 aa)) form a domain II region. Lys-216 is modified (N6-succinyllysine). Arg-223 is a binding site for FAD. 2 positions are modified to N6-acetyllysine; alternate: Lys-226 and Lys-232. Lys-226 and Lys-232 each carry N6-succinyllysine; alternate. Residues Ser-248, 263-266 (VGQT), 281-286 (SGAIQH), and Asn-300 contribute to the FAD site. At Lys-301 the chain carries N6-succinyllysine. 318-319 (DL) provides a ligand contact to FAD.

Belongs to the ETF alpha-subunit/FixB family. In terms of assembly, heterodimer composed of ETFA and ETFB. Identified in a complex that contains ETFA, ETFB and ETFRF1. Interaction with ETFRF1 promotes dissociation of the bound FAD and loss of electron transfer activity. Interacts with TASOR. Requires FAD as cofactor.

Its subcellular location is the mitochondrion matrix. Functionally, heterodimeric electron transfer flavoprotein that accepts electrons from several mitochondrial dehydrogenases, including acyl-CoA dehydrogenases, glutaryl-CoA and sarcosine dehydrogenase. It transfers the electrons to the main mitochondrial respiratory chain via ETF-ubiquinone oxidoreductase (ETF dehydrogenase). Required for normal mitochondrial fatty acid oxidation and normal amino acid metabolism. The protein is Electron transfer flavoprotein subunit alpha, mitochondrial (ETFA) of Macaca fascicularis (Crab-eating macaque).